The following is a 490-amino-acid chain: Ribosomal L1 domain-containing protein 1 (490 aa).

Position 1 is an N-acetylmethionine (M1). Residues 1–27 (MEDSASASLSSAAATGTSTSTPAAPTA) are compositionally biased toward low complexity. The tract at residues 1-33 (MEDSASASLSSAAATGTSTSTPAAPTARKQLDK) is disordered. Glycyl lysine isopeptide (Lys-Gly) (interchain with G-Cter in SUMO2) cross-links involve residues K120 and K254. Positions 280 to 293 (LNKKKKEARRKRRE) are enriched in basic residues. Positions 280-313 (LNKKKKEARRKRRERNFEKQKERKKKRQQARKTA) form a coiled coil. A disordered region spans residues 280–490 (LNKKKKEARR…PKKPKVPQST (211 aa)). Residues 329 to 343 (TVKKPESKKEQTPEH) are compositionally biased toward basic and acidic residues. A Phosphothreonine modification is found at T340. Residues 344 to 353 (GKKKRGRGKA) show a composition bias toward basic residues. Residue T358 is modified to Phosphothreonine. S361 bears the Phosphoserine mark. The residue at position 375 (T375) is a Phosphothreonine. The span at 376–385 (PANEKVEIQK) shows a compositional bias: basic and acidic residues. A Glycyl lysine isopeptide (Lys-Gly) (interchain with G-Cter in SUMO2) cross-link involves residue K380. 2 positions are modified to phosphoserine: S392 and S396. Phosphothreonine is present on residues T415 and T423. S427 is subject to Phosphoserine. Basic and acidic residues predominate over residues 427–460 (SPEKKPKIKEEAVKEKSPSLGKKDARQTPKKPEA). A Glycyl lysine isopeptide (Lys-Gly) (interchain with G-Cter in SUMO2) cross-link involves residue K435. S443 carries the post-translational modification Phosphoserine. Residue K461 forms a Glycyl lysine isopeptide (Lys-Gly) (interchain with G-Cter in SUMO2) linkage. T465 carries the phosphothreonine modification. An N6-acetyllysine modification is found at K468. The residue at position 469 (S469) is a Phosphoserine. Over residues 469–490 (SVRKASHTPKKWPKKPKVPQST) the composition is skewed to basic residues.

It belongs to the universal ribosomal protein uL1 family. Highly divergent. As to quaternary structure, interacts with ING1 (isoform 2). Interacts with KPNA7 and KPNA2. Expressed at high intensities in the heart, skeletal muscle, and placenta.

Its subcellular location is the nucleus. The protein localises to the nucleolus. Functionally, regulates cellular senescence through inhibition of PTEN translation. Acts as a pro-apoptotic regulator in response to DNA damage. The chain is Ribosomal L1 domain-containing protein 1 (RSL1D1) from Homo sapiens (Human).